Reading from the N-terminus, the 361-residue chain is 4-hydroxytryptamine kinase (361 aa).

ATP contacts are provided by residues N37, K57, and 118 to 120; that span reads QDV. D224 is an active-site residue. 248-250 contacts ATP; the sequence is DWE.

It belongs to the methylthioribose kinase family. In terms of assembly, monomer. Requires Mg(2+) as cofactor.

The catalysed reaction is 4-hydroxytryptamine + ATP = norbaeocystin + ADP + H(+). The enzyme catalyses psilocin + ATP = psilocybin + ADP + H(+). It catalyses the reaction 4-hydroxy-N,N,N-trimethyltryptamine + ATP = aeruginascin + ADP + H(+). Its pathway is secondary metabolite biosynthesis. Functionally, 4-hydroxytryptamine kinase; part of the gene cluster that mediates the biosynthesis of psilocybin, a psychotropic tryptamine-derived natural product. The first step in the pathway is the decarboxylation of L-tryptophan to tryptamine by the decarboxylase psiD. PsiD does not decarboxylate phenylalanine, tyrosine, or 5-hydroxy- L -tryptophan (5-HTP). 4-hydroxy-L-tryptophan is accepted as substrate by psiD as well. The cytochrome P450 monooxygenase psiH then converts tryptamine to 4-hydroxytryptamine. The kinase psiK catalyzes the 4-O-phosphorylation step by converting 4-hydroxytryptamine into norbaeocystin. The methyltransferase psiM then catalyzes iterative methyl transfer to the amino group of norbaeocystin to yield psilocybin via a monomethylated intermediate, baeocystin. 4-hydroxy-6-methyl-l-tryptophancan also be converted the decarboxylase PsiD, kinase PsiK, and methyltransferase PsiM into respectively 6-methyl-norbaeocystin, 6-methylbaeocystin, and 6-methylpsilocybin. PsiK kinase can also turn psilocin into psilocybin. This activity may represent a protective mechanism to rephosphorylate the unstable psilocin to the stable psilocybin in case of intracellular ester cleavage. Moreover, psiK is able to O-phosphorylate the quaternary amine 4-hydroxy-N,N,N-trimethyltryptamine (4-OH-TMT) to yield aeruginascin, another bioactive compound found in Psilocybe species. This Psilocybe cyanescens protein is 4-hydroxytryptamine kinase.